A 210-amino-acid chain; its full sequence is HTH-type transcriptional regulator TtgR (210 aa).

Positions Gln-10–His-70 constitute an HTH tetR-type domain. The segment at residues Thr-33–Phe-52 is a DNA-binding region (H-T-H motif).

In terms of assembly, homodimer.

Its function is as follows. Represses expression from the ttgABC operon promoter and its own expression. Binds to a promoter region between the divergently transcribed ttgR and ttgABC genes/operons; in the presence of chloramphenicol or tetracycline this binding no longer occurs and ttgR and ttgABC are derepressed. This suggests that TtgR binds these antibiotics. The protein is HTH-type transcriptional regulator TtgR (ttgR) of Pseudomonas putida (strain DOT-T1E).